A 659-amino-acid chain; its full sequence is tRNA 5-methylaminomethyl-2-thiouridine biosynthesis bifunctional protein MnmC (659 aa).

The interval 1–236 (MKPVMPHAQL…KWEILRGEFL (236 aa)) is tRNA (mnm(5)s(2)U34)-methyltransferase. The interval 267–659 (IGAGLAGCAT…FALRRLIRGK (393 aa)) is FAD-dependent cmnm(5)s(2)U34 oxidoreductase.

This sequence in the N-terminal section; belongs to the methyltransferase superfamily. tRNA (mnm(5)s(2)U34)-methyltransferase family. It in the C-terminal section; belongs to the DAO family. The cofactor is FAD.

Its subcellular location is the cytoplasm. It carries out the reaction 5-aminomethyl-2-thiouridine(34) in tRNA + S-adenosyl-L-methionine = 5-methylaminomethyl-2-thiouridine(34) in tRNA + S-adenosyl-L-homocysteine + H(+). Catalyzes the last two steps in the biosynthesis of 5-methylaminomethyl-2-thiouridine (mnm(5)s(2)U) at the wobble position (U34) in tRNA. Catalyzes the FAD-dependent demodification of cmnm(5)s(2)U34 to nm(5)s(2)U34, followed by the transfer of a methyl group from S-adenosyl-L-methionine to nm(5)s(2)U34, to form mnm(5)s(2)U34. The chain is tRNA 5-methylaminomethyl-2-thiouridine biosynthesis bifunctional protein MnmC from Pseudomonas fluorescens (strain Pf0-1).